The chain runs to 257 residues: UPF0246 protein CLH_2088 (257 aa).

The protein belongs to the UPF0246 family.

The protein is UPF0246 protein CLH_2088 of Clostridium botulinum (strain Alaska E43 / Type E3).